Reading from the N-terminus, the 715-residue chain is Coiled-coil domain-containing protein 170 (715 aa).

Coiled coils occupy residues valine 30–glutamine 286, glutamate 360–glycine 418, and glutamate 478–valine 656. The interval methionine 355–glutamate 591 is required for binding to microtubules and Golgi apparatus location.

Binds Golgi-associated microtubules.

It is found in the golgi apparatus. Functionally, plays a role in Golgi-associated microtubules organization and stabilization. The polypeptide is Coiled-coil domain-containing protein 170 (Homo sapiens (Human)).